Reading from the N-terminus, the 288-residue chain is Light-independent protochlorophyllide reductase iron-sulfur ATP-binding protein (288 aa).

ATP is bound by residues 10–15 and Lys-39; that span reads GIGKST. Ser-14 is a binding site for Mg(2+). [4Fe-4S] cluster is bound by residues Cys-95 and Cys-129. 180–181 serves as a coordination point for ATP; that stretch reads NR.

This sequence belongs to the NifH/BchL/ChlL family. In terms of assembly, homodimer. Protochlorophyllide reductase is composed of three subunits; ChlL, ChlN and ChlB. Requires [4Fe-4S] cluster as cofactor.

The enzyme catalyses chlorophyllide a + oxidized 2[4Fe-4S]-[ferredoxin] + 2 ADP + 2 phosphate = protochlorophyllide a + reduced 2[4Fe-4S]-[ferredoxin] + 2 ATP + 2 H2O. It participates in porphyrin-containing compound metabolism; chlorophyll biosynthesis (light-independent). Component of the dark-operative protochlorophyllide reductase (DPOR) that uses Mg-ATP and reduced ferredoxin to reduce ring D of protochlorophyllide (Pchlide) to form chlorophyllide a (Chlide). This reaction is light-independent. The L component serves as a unique electron donor to the NB-component of the complex, and binds Mg-ATP. The protein is Light-independent protochlorophyllide reductase iron-sulfur ATP-binding protein of Trichodesmium erythraeum (strain IMS101).